We begin with the raw amino-acid sequence, 362 residues long: Nuclear hormone receptor family member nhr-77 (362 aa).

The nuclear receptor DNA-binding region spans 8–82; it reads DPICPVCEFP…AGMKRNLVKQ (75 aa). NR C4-type zinc fingers lie at residues 11 to 32 and 48 to 69; these read CPVCEFPSNVELHFGGLVCGAC and CEKNNQCKGMRKNCRACRFDYC. The NR LBD domain maps to 145-362; that stretch reads EAEKDVSKIL…KLYIQLGLPF (218 aa).

The protein belongs to the nuclear hormone receptor family.

Its subcellular location is the nucleus. Its function is as follows. Orphan nuclear receptor. This is Nuclear hormone receptor family member nhr-77 (nhr-77) from Caenorhabditis elegans.